A 233-amino-acid chain; its full sequence is Large ribosomal subunit protein uL1 (233 aa).

Belongs to the universal ribosomal protein uL1 family. Part of the 50S ribosomal subunit.

Binds directly to 23S rRNA. The L1 stalk is quite mobile in the ribosome, and is involved in E site tRNA release. In terms of biological role, protein L1 is also a translational repressor protein, it controls the translation of the L11 operon by binding to its mRNA. The polypeptide is Large ribosomal subunit protein uL1 (Novosphingobium aromaticivorans (strain ATCC 700278 / DSM 12444 / CCUG 56034 / CIP 105152 / NBRC 16084 / F199)).